The primary structure comprises 427 residues: Serine--tRNA ligase 2 (427 aa).

Residues 35-53 (RRRSEAQAEVTRLRTELNR) show a composition bias toward basic and acidic residues. A disordered region spans residues 35–72 (RRRSEAQAEVTRLRTELNRTSRARGRSGPPSEEEKEAA). 230–232 (TAE) is a binding site for L-serine. 261 to 263 (RAE) provides a ligand contact to ATP. Glutamate 284 provides a ligand contact to L-serine. 348–351 (EISS) is an ATP binding site. Residue serine 383 participates in L-serine binding.

Belongs to the class-II aminoacyl-tRNA synthetase family. Type-1 seryl-tRNA synthetase subfamily. Homodimer. The tRNA molecule binds across the dimer.

It localises to the cytoplasm. The enzyme catalyses tRNA(Ser) + L-serine + ATP = L-seryl-tRNA(Ser) + AMP + diphosphate + H(+). The catalysed reaction is tRNA(Sec) + L-serine + ATP = L-seryl-tRNA(Sec) + AMP + diphosphate + H(+). It participates in aminoacyl-tRNA biosynthesis; selenocysteinyl-tRNA(Sec) biosynthesis; L-seryl-tRNA(Sec) from L-serine and tRNA(Sec): step 1/1. Its function is as follows. Catalyzes the attachment of serine to tRNA(Ser). Is also able to aminoacylate tRNA(Sec) with serine, to form the misacylated tRNA L-seryl-tRNA(Sec), which will be further converted into selenocysteinyl-tRNA(Sec). This is Serine--tRNA ligase 2 from Streptomyces avermitilis (strain ATCC 31267 / DSM 46492 / JCM 5070 / NBRC 14893 / NCIMB 12804 / NRRL 8165 / MA-4680).